The following is a 551-amino-acid chain: L-lactate permease (551 aa).

13 helical membrane-spanning segments follow: residues asparagine 13–isoleucine 33, leucine 37–phenylalanine 57, valine 69–phenylalanine 89, glycine 131–phenylalanine 151, leucine 159–valine 179, methionine 194–methionine 214, isoleucine 220–leucine 240, phenylalanine 244–leucine 264, phenylalanine 366–tryptophan 386, leucine 405–serine 425, threonine 438–glycine 458, valine 494–valine 514, and isoleucine 530–isoleucine 550.

The protein belongs to the lactate permease family.

The protein localises to the cell inner membrane. The enzyme catalyses (S)-lactate(in) + H(+)(in) = (S)-lactate(out) + H(+)(out). It carries out the reaction (R)-lactate(in) + H(+)(in) = (R)-lactate(out) + H(+)(out). It catalyses the reaction glycolate(in) + H(+)(in) = glycolate(out) + H(+)(out). With respect to regulation, inhibited by the proton ionophore carbonyl cyanide m-chlorophenylhydrazone (CCCP). Its function is as follows. Uptake of L-lactate across the membrane. Can also transport D-lactate and glycolate. Seems to be driven by a proton motive force. The polypeptide is L-lactate permease (Escherichia coli (strain K12)).